The chain runs to 627 residues: Carnitine O-acetyltransferase, mitochondrial (627 aa).

The active-site Proton acceptor is H336. CoA is bound by residues K418 and K422–D429. (R)-carnitine-binding residues include Y451, S453, and T464. A CoA-binding site is contributed by Q553. A Microbody targeting signal motif is present at residues P625–L627.

It belongs to the carnitine/choline acetyltransferase family.

It is found in the peroxisome. It localises to the mitochondrion inner membrane. It catalyses the reaction (R)-carnitine + acetyl-CoA = O-acetyl-(R)-carnitine + CoA. Carnitine acetylase is specific for short chain fatty acids. Carnitine acetylase seems to affect the flux through the pyruvate dehydrogenase complex. It may be involved as well in the transport of acetyl-CoA into mitochondria. The chain is Carnitine O-acetyltransferase, mitochondrial (CAT2) from Candida tropicalis (Yeast).